The following is a 1250-amino-acid chain: Cell adhesion molecule-related/down-regulated by oncogenes (1250 aa).

The first 24 residues, 1 to 24 (MHPDLGPLWTLLYVLVILCSSVSS), serve as a signal peptide directing secretion. At 25–962 (DLAPYFISEP…SPARSSDMLY (938 aa)) the chain is on the extracellular side. Ig-like C2-type domains follow at residues 28-113 (PYFI…ATVS), 119-203 (DFDS…LKVE), 224-302 (PALS…KHVT), 309-395 (EHAS…GRLQ), and 404-515 (PVIV…AFLT). Residues cysteine 49 and cysteine 96 are joined by a disulfide bond. Residues asparagine 99, asparagine 179, asparagine 286, asparagine 293, asparagine 341, and asparagine 426 are each glycosylated (N-linked (GlcNAc...) asparagine). 2 disulfide bridges follow: cysteine 140–cysteine 190 and cysteine 242–cysteine 289. Intrachain disulfides connect cysteine 332/cysteine 379 and cysteine 425/cysteine 499. Residues 524-534 (KAESVTPSEAS) show a composition bias toward polar residues. The interval 524-547 (KAESVTPSEASQNDERDPQDGSES) is disordered. Asparagine 569 carries an N-linked (GlcNAc...) asparagine glycan. 3 consecutive Fibronectin type-III domains span residues 572–673 (VPDA…SKEK), 719–814 (APDR…VAGF), and 822–922 (PITG…TKVK). Asparagine 869 carries N-linked (GlcNAc...) asparagine glycosylation. Positions 929–951 (DYPVKELSTPPSSSGNAGNVGPA) are disordered. A helical membrane pass occupies residues 963–983 (LIVGCVLGVMVLILMVFIALC). Residues 984-1250 (LWKSRQQSTI…SVVLQQAQET (267 aa)) are Cytoplasmic-facing. 2 disordered regions span residues 1178–1208 (DNISDINSDSTEDTAEFSRGDSSGHSEAEDK) and 1223–1250 (DCGEKTARSPPGPPLDGLSVVLQQAQET). A compositionally biased stretch (basic and acidic residues) spans 1193–1208 (EFSRGDSSGHSEAEDK).

Part of a complex that contains BOC, CDON, NEO1, cadherins and CTNNB1. Interacts with NTN3. Interacts with DHH, IHH and SHH. N-glycosylated. As to expression, highly expressed in somites and the dorsal lips of the neural tube during embryogenesis. Detected at very low levels in adult tissues.

The protein localises to the cell membrane. Component of a cell-surface receptor complex that mediates cell-cell interactions between muscle precursor cells. Promotes differentiation of myogenic cells. Required for response to NTN3 and activation of NFATC3. The protein is Cell adhesion molecule-related/down-regulated by oncogenes (Cdon) of Mus musculus (Mouse).